We begin with the raw amino-acid sequence, 225 residues long: MASRDSSAASEITPDVLLRAYACGIFPMAESVDDPSLFWVEPDMRGIIPLGGFRVSSRLARTVRSDAFTVTVNRDFKAVIDGCAAPQPGRDDTWINRRIRELYIGLHDIGHCHSVEVWQDGDLAGGLYGVSLGRAFFGESMFHRARDASKVALVHLVARLLAGGYTLLDTQFVTDHLKSFGAIEVPRLRYRSLLDDSLEGEASFAALPLDRPVTGTEALAIITRT.

Belongs to the L/F-transferase family.

Its subcellular location is the cytoplasm. It catalyses the reaction N-terminal L-lysyl-[protein] + L-leucyl-tRNA(Leu) = N-terminal L-leucyl-L-lysyl-[protein] + tRNA(Leu) + H(+). The enzyme catalyses N-terminal L-arginyl-[protein] + L-leucyl-tRNA(Leu) = N-terminal L-leucyl-L-arginyl-[protein] + tRNA(Leu) + H(+). The catalysed reaction is L-phenylalanyl-tRNA(Phe) + an N-terminal L-alpha-aminoacyl-[protein] = an N-terminal L-phenylalanyl-L-alpha-aminoacyl-[protein] + tRNA(Phe). In terms of biological role, functions in the N-end rule pathway of protein degradation where it conjugates Leu, Phe and, less efficiently, Met from aminoacyl-tRNAs to the N-termini of proteins containing an N-terminal arginine or lysine. This chain is Leucyl/phenylalanyl-tRNA--protein transferase, found in Rhodopseudomonas palustris (strain TIE-1).